Reading from the N-terminus, the 446-residue chain is Phosphoglucosamine mutase (446 aa).

Residue S103 is the Phosphoserine intermediate of the active site. Residues S103, D242, D244, and D246 each coordinate Mg(2+). Position 103 is a phosphoserine (S103).

This sequence belongs to the phosphohexose mutase family. Requires Mg(2+) as cofactor. In terms of processing, activated by phosphorylation.

The enzyme catalyses alpha-D-glucosamine 1-phosphate = D-glucosamine 6-phosphate. In terms of biological role, catalyzes the conversion of glucosamine-6-phosphate to glucosamine-1-phosphate. This Vibrio cholerae serotype O1 (strain ATCC 39541 / Classical Ogawa 395 / O395) protein is Phosphoglucosamine mutase.